Reading from the N-terminus, the 147-residue chain is 3-dehydroquinate dehydratase (147 aa).

The Proton acceptor role is filled by Tyr-23. Substrate is bound by residues Asn-74, His-80, and Asp-87. The Proton donor role is filled by His-100. Residues 101-102 and Arg-111 contribute to the substrate site; that span reads IS.

Belongs to the type-II 3-dehydroquinase family. Homododecamer.

It catalyses the reaction 3-dehydroquinate = 3-dehydroshikimate + H2O. The protein operates within metabolic intermediate biosynthesis; chorismate biosynthesis; chorismate from D-erythrose 4-phosphate and phosphoenolpyruvate: step 3/7. Its function is as follows. Catalyzes a trans-dehydration via an enolate intermediate. The protein is 3-dehydroquinate dehydratase of Bacillus pumilus (strain SAFR-032).